The chain runs to 359 residues: Membrane-bound lytic murein transglycosylase C (359 aa).

The signal sequence occupies residues 1–16; it reads MKKYLALALIAPLLIS. A lipid anchor (N-palmitoyl cysteine) is attached at Cys-17. Cys-17 carries S-diacylglycerol cysteine lipidation.

The protein belongs to the transglycosylase Slt family.

It localises to the cell outer membrane. It carries out the reaction Exolytic cleavage of the (1-&gt;4)-beta-glycosidic linkage between N-acetylmuramic acid (MurNAc) and N-acetylglucosamine (GlcNAc) residues in peptidoglycan, from either the reducing or the non-reducing ends of the peptidoglycan chains, with concomitant formation of a 1,6-anhydrobond in the MurNAc residue.. Functionally, murein-degrading enzyme. May play a role in recycling of muropeptides during cell elongation and/or cell division. The sequence is that of Membrane-bound lytic murein transglycosylase C from Escherichia coli O81 (strain ED1a).